The primary structure comprises 603 residues: MLSLAHALESQLRAAIDRAFPEAAASARESGTGLDPQLAPASKPEFGDFQANAALPLAKPLKQPPRQIAAAIVDQLMVDTAFNAICLTPDIAGPGFINLTVRPECLAAEVQARLADARLGVPLVEGDNDGQQPTPVVVDFSSPNIAKEMHVGHLRSTIIGDSLARVLEFRGHPVLRLNHVGDWGTQFGMLITHLKQVAPEALETADAVDLGDLVVFYRQAKQRFDDDEAFQTTSREEVVKLQGGDPLSLKAWSLLCDQSRREFQKIYDRLDVRLNERGESFYNAYLESVVEDLNVSGLLVSDDGAQCVFLEGVTGKDGKPLPVIVQKSDGGFNYATTDLAAMRYRFAAPPQGDGARRVIYVTDAGQANHFAGVFQVAQRAGWIPDAGRLQHVPFGLVQGEDGKKLKTRAGDTVRLRELLDEAVERAESDLRRRLQEEGRDEDESFIEQVATTVGLAAVKYADLSQNRITNYQFSFDRMLALQGNTAPYLLYAVVRIAGIARKGGDLDVTTAELQFSETQEWALVRELLKFDAVIAEVEEELLPNRLCTYLFELSQVFNRFYDQVPVLKAEQPSRSCRLALCRLTADTLKLGLSLLGIPTLERM.

Positions 143 to 153 match the 'HIGH' region motif; the sequence is PNIAKEMHVGH.

It belongs to the class-I aminoacyl-tRNA synthetase family. As to quaternary structure, monomer.

It localises to the cytoplasm. The catalysed reaction is tRNA(Arg) + L-arginine + ATP = L-arginyl-tRNA(Arg) + AMP + diphosphate. This Prochlorococcus marinus (strain MIT 9303) protein is Arginine--tRNA ligase.